The primary structure comprises 116 residues: MSEVVQSVDPINFTEAASLKVKELIEEEGDNSLSLRVYITGGGCSGFQYAFAFDNEVKEDDMVITKNGVRLLVDSMSFQYLVGADVDYKDDVEGAYFVIRNPNAKTTCGCGSSFSV.

3 residues coordinate iron-sulfur cluster: C44, C108, and C110.

Belongs to the HesB/IscA family. In terms of assembly, homodimer. Requires iron-sulfur cluster as cofactor.

Required for insertion of 4Fe-4S clusters for at least IspG. The protein is Iron-sulfur cluster insertion protein ErpA of Francisella tularensis subsp. mediasiatica (strain FSC147).